Here is a 178-residue protein sequence, read N- to C-terminus: Aspartate carbamoyltransferase regulatory chain (178 aa).

The span at 1-15 shows a compositional bias: basic and acidic residues; sequence MNDREPNQKESKESV. The segment at 1–23 is disordered; sequence MNDREPNQKESKESVNDAVPRAR. Zn(2+) contacts are provided by C133, C138, C159, and C162.

The protein belongs to the PyrI family. In terms of assembly, contains catalytic and regulatory chains. The cofactor is Zn(2+).

Involved in allosteric regulation of aspartate carbamoyltransferase. The sequence is that of Aspartate carbamoyltransferase regulatory chain from Haloquadratum walsbyi (strain DSM 16790 / HBSQ001).